Here is a 173-residue protein sequence, read N- to C-terminus: MNNPFALFDLPIEFQLDQNRLSERYLALQKALHPDNFANSSAQEQRLAMQKSAEVNDALQILKDPILRADCIIALNTGEQQNTEEKSTQDMAFLMQQMQWREQLEEIENTQDIDGLMTFSAEIEQSNKEKISEISTALSMKDWQQAKLINDRLRFIKKLMTEIERIEDKLADF.

The J domain maps to 3 to 75 (NPFALFDLPI…ILRADCIIAL (73 aa)).

This sequence belongs to the HscB family. In terms of assembly, interacts with HscA and stimulates its ATPase activity.

Its function is as follows. Co-chaperone involved in the maturation of iron-sulfur cluster-containing proteins. Seems to help targeting proteins to be folded toward HscA. This Mannheimia succiniciproducens (strain KCTC 0769BP / MBEL55E) protein is Co-chaperone protein HscB homolog.